Consider the following 1172-residue polypeptide: Ras guanine nucleotide exchange factor W (1172 aa).

2 stretches are compositionally biased toward low complexity: residues 34 to 70 (PIYT…LNNL) and 78 to 87 (NSNSVNNTIS). Disordered stretches follow at residues 34–100 (PIYT…RSNT), 138–162 (KFLD…RIQQ), and 186–246 (FKRS…EIKD). Over residues 194–241 (QPPQSQSQQQQQLQLQQQQQQSMPNLSLGNNINSNNNNNNGSENNDIS) the composition is skewed to low complexity. Helical transmembrane passes span 286-306 (IWLT…DIIG), 320-340 (IMAV…LNLF), 347-367 (FPGT…VTDI), 378-400 (VLSI…ISLI), 432-452 (LTTN…QLLV), and 545-565 (ILHL…NLLI). Residues 666–702 (LLGMLNEIDDSLQAAKEKVEEESIQNSILKKDIEDLY) are a coiled coil. An N-terminal Ras-GEF domain is found at 765-903 (DLNVIQYATI…YIDSIHKRKM (139 aa)). The Ras-GEF domain occupies 938–1170 (DISDIAIQIT…WKMSLSCEQR (233 aa)).

It is found in the membrane. Functionally, promotes the exchange of Ras-bound GDP by GTP. The polypeptide is Ras guanine nucleotide exchange factor W (gefW) (Dictyostelium discoideum (Social amoeba)).